We begin with the raw amino-acid sequence, 269 residues long: 4-hydroxy-tetrahydrodipicolinate reductase (269 aa).

Residues 11-16 and E37 each bind NAD(+); that span reads GASGRM. NADP(+) is bound at residue R38. Residues 101-103 and 125-128 contribute to the NAD(+) site; these read GTT and AGNM. H158 serves as the catalytic Proton donor/acceptor. A (S)-2,3,4,5-tetrahydrodipicolinate-binding site is contributed by H159. K162 serves as the catalytic Proton donor. Position 168 to 169 (168 to 169) interacts with (S)-2,3,4,5-tetrahydrodipicolinate; that stretch reads GT.

The protein belongs to the DapB family.

It is found in the cytoplasm. The enzyme catalyses (S)-2,3,4,5-tetrahydrodipicolinate + NAD(+) + H2O = (2S,4S)-4-hydroxy-2,3,4,5-tetrahydrodipicolinate + NADH + H(+). It catalyses the reaction (S)-2,3,4,5-tetrahydrodipicolinate + NADP(+) + H2O = (2S,4S)-4-hydroxy-2,3,4,5-tetrahydrodipicolinate + NADPH + H(+). It functions in the pathway amino-acid biosynthesis; L-lysine biosynthesis via DAP pathway; (S)-tetrahydrodipicolinate from L-aspartate: step 4/4. Functionally, catalyzes the conversion of 4-hydroxy-tetrahydrodipicolinate (HTPA) to tetrahydrodipicolinate. In Cereibacter sphaeroides (strain KD131 / KCTC 12085) (Rhodobacter sphaeroides), this protein is 4-hydroxy-tetrahydrodipicolinate reductase.